The chain runs to 398 residues: tRNA(Ile)-lysidine synthase (398 aa).

17 to 22 contributes to the ATP binding site; it reads SGGPDS.

Belongs to the tRNA(Ile)-lysidine synthase family.

It localises to the cytoplasm. The catalysed reaction is cytidine(34) in tRNA(Ile2) + L-lysine + ATP = lysidine(34) in tRNA(Ile2) + AMP + diphosphate + H(+). Functionally, ligates lysine onto the cytidine present at position 34 of the AUA codon-specific tRNA(Ile) that contains the anticodon CAU, in an ATP-dependent manner. Cytidine is converted to lysidine, thus changing the amino acid specificity of the tRNA from methionine to isoleucine. In Mesoplasma florum (strain ATCC 33453 / NBRC 100688 / NCTC 11704 / L1) (Acholeplasma florum), this protein is tRNA(Ile)-lysidine synthase.